Consider the following 165-residue polypeptide: Neurotrophin-3 (165 aa).

An N-terminal signal peptide occupies residues 1–3; sequence IQS. A propeptide spanning residues 4–119 is cleaved from the precursor; that stretch reads TSMDQGSLTE…VLNRTSRRKR (116 aa). N-linked (GlcNAc...) asparagine glycosylation is present at asparagine 112.

This sequence belongs to the NGF-beta family.

It is found in the secreted. In terms of biological role, seems to promote the survival of visceral and proprioceptive sensory neurons. In Calabaria reinhardtii (Calabar boa), this protein is Neurotrophin-3 (NTF3).